We begin with the raw amino-acid sequence, 269 residues long: NAD kinase (269 aa).

D45 functions as the Proton acceptor in the catalytic mechanism. Residues 45–46 (DG), 122–123 (NE), R149, D151, and A186 each bind NAD(+).

The protein belongs to the NAD kinase family. It depends on a divalent metal cation as a cofactor.

The protein localises to the cytoplasm. The enzyme catalyses NAD(+) + ATP = ADP + NADP(+) + H(+). In terms of biological role, involved in the regulation of the intracellular balance of NAD and NADP, and is a key enzyme in the biosynthesis of NADP. Catalyzes specifically the phosphorylation on 2'-hydroxyl of the adenosine moiety of NAD to yield NADP. This is NAD kinase from Staphylococcus carnosus (strain TM300).